We begin with the raw amino-acid sequence, 249 residues long: 3-deoxy-manno-octulosonate cytidylyltransferase (249 aa).

Belongs to the KdsB family.

The protein localises to the cytoplasm. The enzyme catalyses 3-deoxy-alpha-D-manno-oct-2-ulosonate + CTP = CMP-3-deoxy-beta-D-manno-octulosonate + diphosphate. The protein operates within nucleotide-sugar biosynthesis; CMP-3-deoxy-D-manno-octulosonate biosynthesis; CMP-3-deoxy-D-manno-octulosonate from 3-deoxy-D-manno-octulosonate and CTP: step 1/1. It participates in bacterial outer membrane biogenesis; lipopolysaccharide biosynthesis. Activates KDO (a required 8-carbon sugar) for incorporation into bacterial lipopolysaccharide in Gram-negative bacteria. The chain is 3-deoxy-manno-octulosonate cytidylyltransferase from Coxiella burnetii (strain RSA 331 / Henzerling II).